Consider the following 248-residue polypeptide: 7-cyano-7-deazaguanine synthase (248 aa).

22–32 serves as a coordination point for ATP; sequence LSGGLDSTTCL. C216, C225, C228, and C231 together coordinate Zn(2+).

The protein belongs to the QueC family. It depends on Zn(2+) as a cofactor.

It carries out the reaction 7-carboxy-7-deazaguanine + NH4(+) + ATP = 7-cyano-7-deazaguanine + ADP + phosphate + H2O + H(+). It participates in purine metabolism; 7-cyano-7-deazaguanine biosynthesis. Its function is as follows. Catalyzes the ATP-dependent conversion of 7-carboxy-7-deazaguanine (CDG) to 7-cyano-7-deazaguanine (preQ(0)). This Leptospira biflexa serovar Patoc (strain Patoc 1 / Ames) protein is 7-cyano-7-deazaguanine synthase.